The following is a 235-amino-acid chain: N-alpha-acetyltransferase 10 (235 aa).

M1 carries the post-translational modification N-acetylmethionine. The tract at residues 1-58 (MNIRNARPEDLMNMQHCNLLCLPENYQMKYYFYHGLSWPQLSYIAEDENGKIVGYVLA) is interaction with NAA15. Residues 1–152 (MNIRNARPED…DAYAMKRDLT (152 aa)) enclose the N-acetyltransferase domain. Residue K136 is modified to N6-acetyllysine; by autocatalysis. The span at 196-213 (EEKGLAAEDSGGDSKDLS) shows a compositional bias: basic and acidic residues. The disordered stretch occupies residues 196-235 (EEKGLAAEDSGGDSKDLSEVSETTESTDVKDSSEASDSAS). The residue at position 205 (S205) is a Phosphoserine. S209 is subject to Phosphoserine; by IKKB. Phosphoserine occurs at positions 213 and 216.

It belongs to the acetyltransferase family. ARD1 subfamily. Component of the N-terminal acetyltransferase A complex (also called the NatA complex) composed of NAA10 and NAA15. Interacts with NAA15. Component of the N-terminal acetyltransferase A (NatA)/HYPK complex at least composed of NAA10, NAA15 and HYPK, which has N-terminal acetyltransferase activity. In complex with NAA15, interacts with HYPK. Component of the N-terminal acetyltransferase E (NatE) complex at least composed of NAA10, NAA15 and NAA50. Within the complex interacts with NAA15; the interaction is required for binding to NAAT50. Interacts with NAAT50. The interaction of the NatA complex with NAA50 reduces the acetylation activity of the NatA complex. Component of the N-terminal acetyltransferase E (NatE)/HYPK complex at least composed of NAA10, NAA15, NAA50 and HYPK. In complex with NAA15, interacts with HYPK; the interaction with HYPK reduces the capacity of the NatA complex to interact with NAA50. Interacts with HIF1A (via its ODD domain); the interaction increases HIF1A protein stability during normoxia, an down-regulates it when induced by hypoxia. Interacts with the ribosome. Binds to MYLK. Interacts with NAA16. Interacts (via its C-terminal domain) with TSC2, leading to its acetylation. Interacts with IKBKB. Interacts with HSPA1A and HSPA1B leading to its acetylation. Post-translationally, cleaved by caspases during apoptosis. In terms of processing, phosphorylation by IKBKB/IKKB at Ser-209 destabilises NAA10 and promotes its proteasome-mediated degradation. Autoacetylated at Lys-136 which stimulates its catalytic activity. In terms of tissue distribution, ubiquitous.

It localises to the cytoplasm. Its subcellular location is the nucleus. The catalysed reaction is N-terminal glycyl-[protein] + acetyl-CoA = N-terminal N(alpha)-acetylglycyl-[protein] + CoA + H(+). It carries out the reaction N-terminal L-alanyl-[protein] + acetyl-CoA = N-terminal N(alpha)-acetyl-L-alanyl-[protein] + CoA + H(+). The enzyme catalyses N-terminal L-seryl-[protein] + acetyl-CoA = N-terminal N(alpha)-acetyl-L-seryl-[protein] + CoA + H(+). It catalyses the reaction N-terminal L-valyl-[protein] + acetyl-CoA = N-terminal N(alpha)-acetyl-L-valyl-[protein] + CoA + H(+). The catalysed reaction is N-terminal L-cysteinyl-[protein] + acetyl-CoA = N-terminal N(alpha)-acetyl-L-cysteinyl-[protein] + CoA + H(+). It carries out the reaction N-terminal L-threonyl-[protein] + acetyl-CoA = N-terminal N(alpha)-acetyl-L-threonyl-[protein] + CoA + H(+). In terms of biological role, catalytic subunit of the N-terminal acetyltransferase A (NatA) complex which displays alpha (N-terminal) acetyltransferase activity. Acetylates amino termini that are devoid of initiator methionine. The alpha (N-terminal) acetyltransferase activity may be important for vascular, hematopoietic and neuronal growth and development. Without NAA15, displays epsilon (internal) acetyltransferase activity towards HIF1A, thereby promoting its degradation. Represses MYLK kinase activity by acetylation, and thus represses tumor cell migration. Acetylates, and stabilizes TSC2, thereby repressing mTOR activity and suppressing cancer development. Acetylates HSPA1A and HSPA1B at 'Lys-77' which enhances its chaperone activity and leads to preferential binding to co-chaperone HOPX. Acetylates HIST1H4A. Acts as a negative regulator of sister chromatid cohesion during mitosis. This chain is N-alpha-acetyltransferase 10 (Naa10), found in Mus musculus (Mouse).